Here is a 127-residue protein sequence, read N- to C-terminus: Aspartate 1-decarboxylase (127 aa).

S25 functions as the Schiff-base intermediate with substrate; via pyruvic acid in the catalytic mechanism. The residue at position 25 (S25) is a Pyruvic acid (Ser). T57 is a substrate binding site. The active-site Proton donor is the Y58. Substrate is bound at residue G73 to A75.

It belongs to the PanD family. Heterooctamer of four alpha and four beta subunits. Requires pyruvate as cofactor. In terms of processing, is synthesized initially as an inactive proenzyme, which is activated by self-cleavage at a specific serine bond to produce a beta-subunit with a hydroxyl group at its C-terminus and an alpha-subunit with a pyruvoyl group at its N-terminus.

It localises to the cytoplasm. The catalysed reaction is L-aspartate + H(+) = beta-alanine + CO2. Its pathway is cofactor biosynthesis; (R)-pantothenate biosynthesis; beta-alanine from L-aspartate: step 1/1. In terms of biological role, catalyzes the pyruvoyl-dependent decarboxylation of aspartate to produce beta-alanine. In Listeria monocytogenes serotype 4b (strain F2365), this protein is Aspartate 1-decarboxylase.